Reading from the N-terminus, the 302-residue chain is Proteasome subunit beta (302 aa).

The propeptide at 1–50 is removed in mature form; by autocatalysis; sequence MTITGSRGFPDGYLAPGSSFLDFAAQHAPTIMPGTQPTFDTIPQDIAPHG. Thr-51 (nucleophile) is an active-site residue. The segment at 277 to 302 is disordered; that stretch reads EPGRDGPGNRLPSQGSATIIPESDQS. Positions 287-302 are enriched in polar residues; it reads LPSQGSATIIPESDQS.

It belongs to the peptidase T1B family. As to quaternary structure, the 20S proteasome core is composed of 14 alpha and 14 beta subunits that assemble into four stacked heptameric rings, resulting in a barrel-shaped structure. The two inner rings, each composed of seven catalytic beta subunits, are sandwiched by two outer rings, each composed of seven alpha subunits. The catalytic chamber with the active sites is on the inside of the barrel. Has a gated structure, the ends of the cylinder being occluded by the N-termini of the alpha-subunits. Is capped by the proteasome-associated ATPase, ARC.

The protein localises to the cytoplasm. The catalysed reaction is Cleavage of peptide bonds with very broad specificity.. It functions in the pathway protein degradation; proteasomal Pup-dependent pathway. With respect to regulation, the formation of the proteasomal ATPase ARC-20S proteasome complex, likely via the docking of the C-termini of ARC into the intersubunit pockets in the alpha-rings, may trigger opening of the gate for substrate entry. Interconversion between the open-gate and close-gate conformations leads to a dynamic regulation of the 20S proteasome proteolysis activity. Functionally, component of the proteasome core, a large protease complex with broad specificity involved in protein degradation. This is Proteasome subunit beta from Jonesia denitrificans (strain ATCC 14870 / DSM 20603 / BCRC 15368 / CIP 55.134 / JCM 11481 / NBRC 15587 / NCTC 10816 / Prevot 55134) (Listeria denitrificans).